Reading from the N-terminus, the 588-residue chain is 2-succinyl-5-enolpyruvyl-6-hydroxy-3-cyclohexene-1-carboxylate synthase (588 aa).

The disordered stretch occupies residues 1-22 (MTTTGSLPAQPSSTSPRTGNPS).

It belongs to the TPP enzyme family. MenD subfamily. Homodimer. Mg(2+) is required as a cofactor. Requires Mn(2+) as cofactor. Thiamine diphosphate serves as cofactor.

The enzyme catalyses isochorismate + 2-oxoglutarate + H(+) = 5-enolpyruvoyl-6-hydroxy-2-succinyl-cyclohex-3-ene-1-carboxylate + CO2. The protein operates within quinol/quinone metabolism; 1,4-dihydroxy-2-naphthoate biosynthesis; 1,4-dihydroxy-2-naphthoate from chorismate: step 2/7. It participates in quinol/quinone metabolism; menaquinone biosynthesis. Its function is as follows. Catalyzes the thiamine diphosphate-dependent decarboxylation of 2-oxoglutarate and the subsequent addition of the resulting succinic semialdehyde-thiamine pyrophosphate anion to isochorismate to yield 2-succinyl-5-enolpyruvyl-6-hydroxy-3-cyclohexene-1-carboxylate (SEPHCHC). This is 2-succinyl-5-enolpyruvyl-6-hydroxy-3-cyclohexene-1-carboxylate synthase from Clavibacter michiganensis subsp. michiganensis (strain NCPPB 382).